Reading from the N-terminus, the 260-residue chain is UPF0758 protein Smed_1459 (260 aa).

The region spanning 138–260 (VLSSWSAVID…HVSLKGLQLF (123 aa)) is the MPN domain. Residues His209, His211, and Asp222 each coordinate Zn(2+). The short motif at 209 to 222 (HNHPSGDPTPSCAD) is the JAMM motif element.

It belongs to the UPF0758 family.

In Sinorhizobium medicae (strain WSM419) (Ensifer medicae), this protein is UPF0758 protein Smed_1459.